We begin with the raw amino-acid sequence, 504 residues long: D-alanine--D-alanyl carrier protein ligase (504 aa).

152-153 (TS) provides a ligand contact to ATP. Asp197 is a D-alanine binding site. Residue 292-297 (NTYGPT) coordinates ATP. Val301 lines the D-alanine pocket. Residues Asp383, 394–397 (YNGR), and Lys492 each bind ATP. Residue Lys492 coordinates D-alanine.

This sequence belongs to the ATP-dependent AMP-binding enzyme family. DltA subfamily.

The protein resides in the cytoplasm. The catalysed reaction is holo-[D-alanyl-carrier protein] + D-alanine + ATP = D-alanyl-[D-alanyl-carrier protein] + AMP + diphosphate. It functions in the pathway cell wall biogenesis; lipoteichoic acid biosynthesis. Its function is as follows. Catalyzes the first step in the D-alanylation of lipoteichoic acid (LTA), the activation of D-alanine and its transfer onto the D-alanyl carrier protein (Dcp) DltC. In an ATP-dependent two-step reaction, forms a high energy D-alanyl-AMP intermediate, followed by transfer of the D-alanyl residue as a thiol ester to the phosphopantheinyl prosthetic group of the Dcp. D-alanylation of LTA plays an important role in modulating the properties of the cell wall in Gram-positive bacteria, influencing the net charge of the cell wall. The protein is D-alanine--D-alanyl carrier protein ligase of Bacillus cereus (strain ZK / E33L).